Consider the following 89-residue polypeptide: Long neurotoxin homolog Pa ID (89 aa).

The first 21 residues, 1–21, serve as a signal peptide directing secretion; it reads MKTLLLTLVVVTIMCLDLGYT. Disulfide bonds link cysteine 24–cysteine 42, cysteine 35–cysteine 63, cysteine 48–cysteine 52, cysteine 67–cysteine 78, and cysteine 79–cysteine 84.

The protein belongs to the three-finger toxin family. Long-chain subfamily. Type II alpha-neurotoxin sub-subfamily. In terms of tissue distribution, expressed by the venom gland.

It localises to the secreted. Its function is as follows. Binds with high affinity to muscular (alpha-1/CHRNA1) and neuronal (alpha-7/CHRNA7) nicotinic acetylcholine receptor (nAChR) and inhibits acetylcholine from binding to the receptor, thereby impairing neuromuscular and neuronal transmission. In Pseudechis australis (Mulga snake), this protein is Long neurotoxin homolog Pa ID.